Consider the following 358-residue polypeptide: Phenylalanine--tRNA ligase alpha subunit (358 aa).

Position 262 (Glu262) interacts with Mg(2+).

The protein belongs to the class-II aminoacyl-tRNA synthetase family. Phe-tRNA synthetase alpha subunit type 1 subfamily. As to quaternary structure, tetramer of two alpha and two beta subunits. The cofactor is Mg(2+).

It localises to the cytoplasm. It carries out the reaction tRNA(Phe) + L-phenylalanine + ATP = L-phenylalanyl-tRNA(Phe) + AMP + diphosphate + H(+). This chain is Phenylalanine--tRNA ligase alpha subunit (pheS), found in Streptomyces coelicolor (strain ATCC BAA-471 / A3(2) / M145).